The following is a 410-amino-acid chain: BRCA1-A complex subunit Abraxas 1 (410 aa).

The MPN domain maps to 7 to 160 (TAVLSGFVLG…HALYKPQKGL (154 aa)). Phosphoserine is present on S48. Residues 208-261 (SLKEVQKINEMYTSLQDELKSICEKVEHSERAVEKLLNDVNRLKGEIKKRKQAQ) adopt a coiled-coil conformation. A disordered region spans residues 354-410 (DGWQFKKSRLGGIQNRPSKTDTNSSNQEQASTVSSPETDEEIERMKGSGEYPQSPTF). A compositionally biased stretch (polar residues) spans 368–389 (NRPSKTDTNSSNQEQASTVSSP). Residues S387 and S388 each carry the phosphoserine modification. Phosphothreonine is present on T391. The residue at position 407 (S407) is a Phosphoserine. The short motif at 407 to 410 (SPTF) is the pSXXF motif element.

This sequence belongs to the FAM175 family. Abraxas subfamily. In terms of assembly, component of the ARISC complex, at least composed of UIMC1/RAP80, ABRAXAS1, BRCC3/BRCC36, BABAM2 and BABAM1/NBA1. Component of the BRCA1-A complex, at least composed of the BRCA1, BARD1, UIMC1/RAP80, ABRAXAS1, BRCC3/BRCC36, BABAM2 and BABAM1/NBA1. In the complex, interacts directly with UIMC1/RAP80, BRCC3/BRCC36 and BABAM2. Homodimer. Interacts directly (when phosphorylated at Ser-407) with BRCA1. The phosphorylated homodimer can interact directly with two BRCA1 chains, giving rise to a heterotetramer. Binds polyubiquitin. Phosphorylation of Ser-407 of the pSXXF motif by ATM or ATR constitutes a specific recognition motif for the BRCT domain of BRCA1.

It localises to the nucleus. Functionally, involved in DNA damage response and double-strand break (DSB) repair. Component of the BRCA1-A complex, acting as a central scaffold protein that assembles the various components of the complex and mediates the recruitment of BRCA1. The BRCA1-A complex specifically recognizes 'Lys-63'-linked ubiquitinated histones H2A and H2AX at DNA lesion sites, leading to target the BRCA1-BARD1 heterodimer to sites of DNA damage at DSBs. This complex also possesses deubiquitinase activity that specifically removes 'Lys-63'-linked ubiquitin on histones H2A and H2AX. The polypeptide is BRCA1-A complex subunit Abraxas 1 (Bos taurus (Bovine)).